Here is a 412-residue protein sequence, read N- to C-terminus: Transforming growth factor beta-3 proprotein (412 aa).

The N-terminal stretch at 1–23 (MKMHLQRALVVLALLNLATVSLS) is a signal peptide. Asn-74, Asn-135, and Asn-142 each carry an N-linked (GlcNAc...) asparagine glycan. Positions 261 to 263 (RGD) match the Cell attachment site motif. Position 293 is an N5-methylglutamine (Gln-293). Cystine bridges form between Cys-307–Cys-316, Cys-315–Cys-378, Cys-344–Cys-409, and Cys-348–Cys-411.

The protein belongs to the TGF-beta family. Interacts with ASPN. Latency-associated peptide: Homodimer; disulfide-linked. Latency-associated peptide: Interacts with Transforming growth factor beta-3 (TGF-beta-3) chain; interaction is non-covalent and maintains (TGF-beta-3) in a latent state. Latency-associated peptide: Interacts with LRRC32/GARP; leading to regulate activation of TGF-beta-3 and promote epithelial fusion during palate development. Latency-associated peptide: Interacts (via cell attachment site) with integrins, leading to release of the active TGF-beta-3. Transforming growth factor beta-3: Homodimer; disulfide-linked. Transforming growth factor beta-3: Interacts with TGF-beta receptors (TGFBR1 and TGFBR2), leading to signal transduction. In terms of processing, transforming growth factor beta-3 proprotein: The precursor proprotein is cleaved in the Golgi apparatus to form Transforming growth factor beta-3 (TGF-beta-3) and Latency-associated peptide (LAP) chains, which remain non-covalently linked, rendering TGF-beta-3 inactive. Methylated at Gln-293 by N6AMT1. As to expression, expressed in cardiomyocytes.

The protein resides in the secreted. Its subcellular location is the extracellular space. The protein localises to the extracellular matrix. Functionally, transforming growth factor beta-3 proprotein: Precursor of the Latency-associated peptide (LAP) and Transforming growth factor beta-3 (TGF-beta-3) chains, which constitute the regulatory and active subunit of TGF-beta-3, respectively. In terms of biological role, required to maintain the Transforming growth factor beta-3 (TGF-beta-3) chain in a latent state during storage in extracellular matrix. Associates non-covalently with TGF-beta-3 and regulates its activation via interaction with 'milieu molecules', such as LTBP1 and LRRC32/GARP, that control activation of TGF-beta-3. Interaction with integrins results in distortion of the Latency-associated peptide chain and subsequent release of the active TGF-beta-3. Its function is as follows. Transforming growth factor beta-3: Multifunctional protein that regulates embryogenesis and cell differentiation and is required in various processes such as secondary palate development. Activation into mature form follows different steps: following cleavage of the proprotein in the Golgi apparatus, Latency-associated peptide (LAP) and Transforming growth factor beta-3 (TGF-beta-3) chains remain non-covalently linked rendering TGF-beta-3 inactive during storage in extracellular matrix. At the same time, LAP chain interacts with 'milieu molecules', such as LTBP1 and LRRC32/GARP that control activation of TGF-beta-3 and maintain it in a latent state during storage in extracellular milieus. TGF-beta-3 is released from LAP by integrins: integrin-binding results in distortion of the LAP chain and subsequent release of the active TGF-beta-3. Once activated following release of LAP, TGF-beta-3 acts by binding to TGF-beta receptors (TGFBR1 and TGFBR2), which transduce signal. The polypeptide is Transforming growth factor beta-3 proprotein (Tgfb3) (Rattus norvegicus (Rat)).